The sequence spans 347 residues: Nicotinate-nucleotide--dimethylbenzimidazole phosphoribosyltransferase (347 aa).

The active-site Proton acceptor is Glu-316.

It belongs to the CobT family.

The catalysed reaction is 5,6-dimethylbenzimidazole + nicotinate beta-D-ribonucleotide = alpha-ribazole 5'-phosphate + nicotinate + H(+). Its pathway is nucleoside biosynthesis; alpha-ribazole biosynthesis; alpha-ribazole from 5,6-dimethylbenzimidazole: step 1/2. Its function is as follows. Catalyzes the synthesis of alpha-ribazole-5'-phosphate from nicotinate mononucleotide (NAMN) and 5,6-dimethylbenzimidazole (DMB). The sequence is that of Nicotinate-nucleotide--dimethylbenzimidazole phosphoribosyltransferase from Vibrio parahaemolyticus serotype O3:K6 (strain RIMD 2210633).